A 655-amino-acid chain; its full sequence is Tetratricopeptide repeat protein 30 homolog (655 aa).

TPR repeat units lie at residues 10–43 (EGHV…ANTR), 44–76 (AGLS…APKE), 143–176 (ADTL…GGFN), 178–210 (LVAY…GMRN), 385–418 (LAAK…YLPV), 450–484 (SIWR…HSDD), and 534–567 (CIVN…GSGN).

The protein belongs to the TTC30/dfy-1/fleer family.

The protein localises to the cell projection. Its subcellular location is the cilium. Required for polyglutamylation of axonemal tubulin in sensory cilia. Plays a role in anterograde intraflagellar transport (IFT), the process by which cilia precursors are transported from the base of the cilium to the site of their incorporation at the tip. The polypeptide is Tetratricopeptide repeat protein 30 homolog (Drosophila melanogaster (Fruit fly)).